The primary structure comprises 119 residues: UPF0102 protein Nmul_A0195 (119 aa).

The protein belongs to the UPF0102 family.

This Nitrosospira multiformis (strain ATCC 25196 / NCIMB 11849 / C 71) protein is UPF0102 protein Nmul_A0195.